The chain runs to 78 residues: Small ribosomal subunit protein bS18 (78 aa).

It belongs to the bacterial ribosomal protein bS18 family. Part of the 30S ribosomal subunit. Forms a tight heterodimer with protein bS6.

Binds as a heterodimer with protein bS6 to the central domain of the 16S rRNA, where it helps stabilize the platform of the 30S subunit. This chain is Small ribosomal subunit protein bS18, found in Beutenbergia cavernae (strain ATCC BAA-8 / DSM 12333 / CCUG 43141 / JCM 11478 / NBRC 16432 / NCIMB 13614 / HKI 0122).